The chain runs to 134 residues: Small ribosomal subunit protein uS8c (134 aa).

The protein belongs to the universal ribosomal protein uS8 family. In terms of assembly, part of the 30S ribosomal subunit.

The protein resides in the plastid. The protein localises to the chloroplast. One of the primary rRNA binding proteins, it binds directly to 16S rRNA central domain where it helps coordinate assembly of the platform of the 30S subunit. The polypeptide is Small ribosomal subunit protein uS8c (rps8) (Nicotiana tabacum (Common tobacco)).